The primary structure comprises 681 residues: Peroxisomal acyl-coenzyme A oxidase 2 (681 aa).

Residues 1 to 28 (MGNPGDRVSLGETWSREVHPDIDSERHS) form a disordered region. Ser-9 is subject to Phosphoserine. Thr-13 carries the post-translational modification Phosphothreonine. Basic and acidic residues predominate over residues 14-28 (WSREVHPDIDSERHS). 6 positions are modified to N6-succinyllysine: Lys-66, Lys-137, Lys-303, Lys-453, Lys-561, and Lys-667. A Microbody targeting signal motif is present at residues 679-681 (PKL).

It belongs to the acyl-CoA oxidase family. As to quaternary structure, homodimer. The cofactor is FAD. Post-translationally, acetylation of Lys-667 is observed in liver mitochondria from fasted mice but not from fed mice.

It is found in the peroxisome. It catalyses the reaction (25R)-3alpha,7alpha,12alpha-trihydroxy-5beta-cholestan-26-oyl-CoA + A + H2O = (24R,25R)-3alpha,7alpha,12alpha,24-tetrahydroxy-5beta-cholestan-26-oyl-CoA + AH2. The enzyme catalyses (25S)-3alpha,7alpha,12alpha-trihydroxy-5beta-cholestan-26-oyl-CoA + O2 = (24E)-3alpha,7alpha,12alpha-trihydroxy-5beta-cholest-24-en-26-oyl-CoA + H2O2. In terms of biological role, oxidizes the CoA esters of the bile acid intermediates di- and tri-hydroxycoprostanic acids. Capable of oxidizing short as well as long chain 2-methyl branched fatty acids. The sequence is that of Peroxisomal acyl-coenzyme A oxidase 2 from Mus musculus (Mouse).